The following is a 625-amino-acid chain: MRQVMNAIPDDLLITAPDEVRIRQDLVLTALGHRPADRSLRVGRLLDVHSRTWSEDQEIVIKGRRIAWVGPAGSYPGEVRERVHRPDVAAVPGFGEVHKHIESSHLTPEWEAALVLPHGNTWTCEASHEFSNVNGARNLEFWFEARRRGSPLKIFPQPGSAVPPTAYEWGGGWYGRDEQARFMAESLMVTGLDEVMDWPAVWNPDNPSYKRLWGMIEATFAARGVVEGHASGLRDLPSINAFAAAGLASDHEVQTPEETWDKLTRGLFVELRVYAMDEIVRWLLAKGLQDWSQIAFTTDDRSASHTLELGASDHNARLAIEAGLAPEIAIQCLTINPARHMRLTPFVGSLAPGRFGDVVLLSDVGKLTIAEVWADGVQISEGERYIGQVPEIVWPDWATKTVNIKRSIKPQDFELRAEPGRATMKAAVIRPFHWHPEFYTLELPVRDGAVQRDESEAITKFAIVDRFSGDGRIAKMFWRGCGPRTPETAVACSVAHDKHNIWVVGSSDAAMAKAVNALIELQGGWALVREGELVATVRFEVGGLMSCRSAQALDAEMQALYAEGRKVDWMYEPTYRPRWYPGFPERLMFATLTCAPWSWVLVAPCEQAPLGFINVQTGEAHPVIW.

This sequence belongs to the metallo-dependent hydrolases superfamily. Adenine deaminase family. The cofactor is Mn(2+).

It catalyses the reaction adenine + H2O + H(+) = hypoxanthine + NH4(+). The protein is Adenine deaminase 2 of Bradyrhizobium diazoefficiens (strain JCM 10833 / BCRC 13528 / IAM 13628 / NBRC 14792 / USDA 110).